Here is a 446-residue protein sequence, read N- to C-terminus: Probable glycine dehydrogenase (decarboxylating) subunit 1 (446 aa).

This sequence belongs to the GcvP family. N-terminal subunit subfamily. As to quaternary structure, the glycine cleavage system is composed of four proteins: P, T, L and H. In this organism, the P 'protein' is a heterodimer of two subunits.

The enzyme catalyses N(6)-[(R)-lipoyl]-L-lysyl-[glycine-cleavage complex H protein] + glycine + H(+) = N(6)-[(R)-S(8)-aminomethyldihydrolipoyl]-L-lysyl-[glycine-cleavage complex H protein] + CO2. In terms of biological role, the glycine cleavage system catalyzes the degradation of glycine. The P protein binds the alpha-amino group of glycine through its pyridoxal phosphate cofactor; CO(2) is released and the remaining methylamine moiety is then transferred to the lipoamide cofactor of the H protein. This is Probable glycine dehydrogenase (decarboxylating) subunit 1 from Coxiella burnetii (strain CbuK_Q154) (Coxiella burnetii (strain Q154)).